The following is a 369-amino-acid chain: 4-hydroxy-3-methylbut-2-en-1-yl diphosphate synthase (flavodoxin) (369 aa).

4 residues coordinate [4Fe-4S] cluster: cysteine 270, cysteine 273, cysteine 305, and glutamate 312.

Belongs to the IspG family. [4Fe-4S] cluster serves as cofactor.

It catalyses the reaction (2E)-4-hydroxy-3-methylbut-2-enyl diphosphate + oxidized [flavodoxin] + H2O + 2 H(+) = 2-C-methyl-D-erythritol 2,4-cyclic diphosphate + reduced [flavodoxin]. It functions in the pathway isoprenoid biosynthesis; isopentenyl diphosphate biosynthesis via DXP pathway; isopentenyl diphosphate from 1-deoxy-D-xylulose 5-phosphate: step 5/6. Converts 2C-methyl-D-erythritol 2,4-cyclodiphosphate (ME-2,4cPP) into 1-hydroxy-2-methyl-2-(E)-butenyl 4-diphosphate. The chain is 4-hydroxy-3-methylbut-2-en-1-yl diphosphate synthase (flavodoxin) from Pseudomonas putida (strain ATCC 47054 / DSM 6125 / CFBP 8728 / NCIMB 11950 / KT2440).